The sequence spans 563 residues: PHD finger protein EHD3 (563 aa).

The disordered stretch occupies residues 1–46; it reads MGSQNRPPPPRKRQPPPPEDHLVTYKRRRSKETQPLPLMANGANSK. PHD-type zinc fingers lie at residues 296–348, 420–472, and 474–524; these read LCPC…CSFK, SNLC…CWYC, and SCLC…CKIR.

Interacts with TRX1. As to expression, expressed in shoot apical meristem and leaves.

It is found in the nucleus. Functionally, probable transcription factor involved in the regulation of floral induction under long day (LD) conditions. Promotes photoperiodic flowering by repressing GHD7, a major floral repressor. Seems to function independently of HD1. The sequence is that of PHD finger protein EHD3 from Oryza sativa subsp. japonica (Rice).